The primary structure comprises 637 residues: PTS system mannitol-specific EIICBA component (637 aa).

The Cytoplasmic portion of the chain corresponds to 1-23; sequence MSSDIKIKVQSFGRFLSNMVMPN. Positions 12-341 constitute a PTS EIIC type-2 domain; it reads FGRFLSNMVM…ILLKTSKVKE (330 aa). A helical membrane pass occupies residues 24–45; it reads IGAFIAWGIITALFIPTGWLPN. Topologically, residues 46–49 are periplasmic; it reads ETLA. Residues 50–70 form a helical membrane-spanning segment; that stretch reads KLVGPMITYLLPLLIGYTGGK. The Cytoplasmic portion of the chain corresponds to 71–133; sequence LVGGERGGVV…SGFEMLVNNF (63 aa). The chain crosses the membrane as a helical span at residues 134 to 155; it reads SAGIIGMILAILAFLGIGPIVE. Residues 156-164 lie on the Periplasmic side of the membrane; sequence ALSKMLAAG. A helical transmembrane segment spans residues 165–185; sequence VNFMVVHDMLPLASIFVEPAK. Topologically, residues 186 to 272 are cytoplasmic; the sequence is ILFLNNAINH…VLMNPRLILA (87 aa). The helical transmembrane segment at 273–292 threads the bilayer; that stretch reads VILGGMTGVFTLTILGGGLV. Topologically, residues 293–312 are periplasmic; it reads SPASPGSILAVLAMTPKGAY. The helical transmembrane segment at 313-334 threads the bilayer; that stretch reads FANIAGVCAAMAVSFVVSAILL. Topologically, residues 335 to 637 are cytoplasmic; sequence KTSKVKEEDD…EVLELLAGRK (303 aa). The PTS EIIB type-2 domain occupies 378–473; that stretch reads RKIIVACDAG…RLVAAQRHTA (96 aa). C384 acts as the Phosphocysteine intermediate; for EIIB activity in catalysis. Position 384 is a phosphocysteine; by EIIA (C384). The PTS EIIA type-2 domain maps to 494–636; that stretch reads FKLGAENIFL…DEVLELLAGR (143 aa). H554 (tele-phosphohistidine intermediate; for EIIA activity) is an active-site residue. H554 carries the post-translational modification Phosphohistidine; by HPr.

As to quaternary structure, homodimer. An intramolecular phosphotransfer takes places between His-554 and Cys-384.

It is found in the cell inner membrane. The catalysed reaction is D-mannitol(out) + N(pros)-phospho-L-histidyl-[protein] = D-mannitol 1-phosphate(in) + L-histidyl-[protein]. Functionally, the phosphoenolpyruvate-dependent sugar phosphotransferase system (sugar PTS), a major carbohydrate active transport system, catalyzes the phosphorylation of incoming sugar substrates concomitantly with their translocation across the cell membrane. This system is involved in D-mannitol transport. Also able to use D-mannonic acid. In Escherichia coli (strain K12), this protein is PTS system mannitol-specific EIICBA component.